The sequence spans 341 residues: Type II methyltransferase M.NgoPII (341 aa).

Residues 12–341 form the SAM-dependent MTase C5-type domain; the sequence is MKIISLFSGC…AAAIKKTLER (330 aa). Cys84 is an active-site residue.

Belongs to the class I-like SAM-binding methyltransferase superfamily. C5-methyltransferase family.

It catalyses the reaction a 2'-deoxycytidine in DNA + S-adenosyl-L-methionine = a 5-methyl-2'-deoxycytidine in DNA + S-adenosyl-L-homocysteine + H(+). A methylase that recognizes the double-stranded sequence 5'-GGCC-3', methylates C-3 on both strands, and protects the DNA from cleavage by the NgoPII endonuclease. This chain is Type II methyltransferase M.NgoPII (ngoPIIM), found in Neisseria gonorrhoeae.